The chain runs to 375 residues: 23S rRNA (uracil(747)-C(5))-methyltransferase RlmC (375 aa).

4 residues coordinate [4Fe-4S] cluster: cysteine 3, cysteine 11, cysteine 14, and cysteine 87. S-adenosyl-L-methionine is bound by residues glutamine 212, phenylalanine 241, glutamate 262, and asparagine 307. The active-site Nucleophile is the cysteine 334.

It belongs to the class I-like SAM-binding methyltransferase superfamily. RNA M5U methyltransferase family. RlmC subfamily.

The enzyme catalyses uridine(747) in 23S rRNA + S-adenosyl-L-methionine = 5-methyluridine(747) in 23S rRNA + S-adenosyl-L-homocysteine + H(+). Functionally, catalyzes the formation of 5-methyl-uridine at position 747 (m5U747) in 23S rRNA. This chain is 23S rRNA (uracil(747)-C(5))-methyltransferase RlmC, found in Enterobacter sp. (strain 638).